A 261-amino-acid chain; its full sequence is Tryptophan synthase alpha chain (261 aa).

Active-site proton acceptor residues include glutamate 47 and aspartate 58.

The protein belongs to the TrpA family. As to quaternary structure, tetramer of two alpha and two beta chains.

It carries out the reaction (1S,2R)-1-C-(indol-3-yl)glycerol 3-phosphate + L-serine = D-glyceraldehyde 3-phosphate + L-tryptophan + H2O. It participates in amino-acid biosynthesis; L-tryptophan biosynthesis; L-tryptophan from chorismate: step 5/5. The alpha subunit is responsible for the aldol cleavage of indoleglycerol phosphate to indole and glyceraldehyde 3-phosphate. This Neisseria meningitidis serogroup B (strain ATCC BAA-335 / MC58) protein is Tryptophan synthase alpha chain.